Reading from the N-terminus, the 421-residue chain is Glutamate-1-semialdehyde 2,1-aminomutase (421 aa).

Residue lysine 261 is modified to N6-(pyridoxal phosphate)lysine.

Belongs to the class-III pyridoxal-phosphate-dependent aminotransferase family. HemL subfamily. Pyridoxal 5'-phosphate serves as cofactor.

It is found in the cytoplasm. The enzyme catalyses (S)-4-amino-5-oxopentanoate = 5-aminolevulinate. Its pathway is porphyrin-containing compound metabolism; protoporphyrin-IX biosynthesis; 5-aminolevulinate from L-glutamyl-tRNA(Glu): step 2/2. The chain is Glutamate-1-semialdehyde 2,1-aminomutase (hemL) from Thermoplasma acidophilum (strain ATCC 25905 / DSM 1728 / JCM 9062 / NBRC 15155 / AMRC-C165).